The primary structure comprises 119 residues: Glucitol operon activator protein (119 aa).

A DNA-binding region (H-T-H motif) is located at residues 23-29; that stretch reads QISRFNR.

Functionally, positive regulator for glucitol operon expression. The sequence is that of Glucitol operon activator protein (gutM) from Escherichia coli (strain K12).